The sequence spans 205 residues: Small ribosomal subunit protein uS4 (205 aa).

The segment at 18-46 (NIWGRPKSPVNRREYGPGQHGQRRKGKLS) is disordered. The 64-residue stretch at 94-157 (RRLDTVVYRA…KQLAFVLEAS (64 aa)) folds into the S4 RNA-binding domain.

The protein belongs to the universal ribosomal protein uS4 family. Part of the 30S ribosomal subunit. Contacts protein S5. The interaction surface between S4 and S5 is involved in control of translational fidelity.

One of the primary rRNA binding proteins, it binds directly to 16S rRNA where it nucleates assembly of the body of the 30S subunit. Its function is as follows. With S5 and S12 plays an important role in translational accuracy. In Rhodopseudomonas palustris (strain HaA2), this protein is Small ribosomal subunit protein uS4.